Reading from the N-terminus, the 146-residue chain is 3-hydroxyacyl-[acyl-carrier-protein] dehydratase FabZ (146 aa).

Residue histidine 49 is part of the active site.

The protein belongs to the thioester dehydratase family. FabZ subfamily.

It is found in the cytoplasm. The catalysed reaction is a (3R)-hydroxyacyl-[ACP] = a (2E)-enoyl-[ACP] + H2O. Involved in unsaturated fatty acids biosynthesis. Catalyzes the dehydration of short chain beta-hydroxyacyl-ACPs and long chain saturated and unsaturated beta-hydroxyacyl-ACPs. In Wolbachia sp. subsp. Brugia malayi (strain TRS), this protein is 3-hydroxyacyl-[acyl-carrier-protein] dehydratase FabZ.